The chain runs to 344 residues: MSVRYEQAGVNLEAGYEAVSRMKRHVARTMRPEVMTGLGSFGAMIDLGSMNMKHPILVSGTDGVGTKLKLAFALDQHDTIGIDCVAMCVNDCLVHGAEPLYFLDYIATGKAEPAKLERIVAGVAEGCVQAGCALVGGETAEMPGMYPDGEYDIAGFAVGVVEKEDLLDGSTIQDGDVVLGLASSGVHSNGFSLVRHIVEAQGLHYTDEIAMLDTTLGNALLLPTRIYAEAAKAAISTGKVQGMAHITGGGFYENVPRMLPGGLGITFDASSWPSLPVFDWLEQVGNISKQEMFNVFNMGIGYMITVRAEDVELVEAALERVGETAHRIGKVESRPGIRISGVDQ.

This sequence belongs to the AIR synthase family.

It localises to the cytoplasm. It carries out the reaction 2-formamido-N(1)-(5-O-phospho-beta-D-ribosyl)acetamidine + ATP = 5-amino-1-(5-phospho-beta-D-ribosyl)imidazole + ADP + phosphate + H(+). The protein operates within purine metabolism; IMP biosynthesis via de novo pathway; 5-amino-1-(5-phospho-D-ribosyl)imidazole from N(2)-formyl-N(1)-(5-phospho-D-ribosyl)glycinamide: step 2/2. In Exiguobacterium sp. (strain ATCC BAA-1283 / AT1b), this protein is Phosphoribosylformylglycinamidine cyclo-ligase.